The following is a 351-amino-acid chain: Molybdate-binding protein MolA (351 aa).

The first 21 residues, 1 to 21 (MKLKSLLIACLLSSLSFSALA), serve as a signal peptide directing secretion. The 282-residue stretch at 41-322 (RAVVLQHQTL…WLAKALYPQR (282 aa)) folds into the Fe/B12 periplasmic-binding domain. Molybdate-binding positions include 47-48 (HQ), Y217, R264, and 300-301 (GY).

This sequence belongs to the bacterial solute-binding protein 8 family. As to quaternary structure, the complex is composed of two ATP-binding proteins (MolC), two transmembrane proteins (MolB) and a solute-binding protein (MolA).

The protein localises to the periplasm. The MolBCA complex shows a decrease in affinity in the presence of increasing concentrations of substrate and nucleotide. Its function is as follows. Part of the ABC transporter complex MolBCA involved in molybdate import. Functions as a low-affinity molybdate transporter. Binds to both molybdate and tungstate, but not to sulfate or phosphate. This Haemophilus influenzae (strain ATCC 51907 / DSM 11121 / KW20 / Rd) protein is Molybdate-binding protein MolA.